A 386-amino-acid polypeptide reads, in one-letter code: Na(+)/H(+) antiporter NhaA (386 aa).

The next 11 helical transmembrane spans lie at 10 to 30 (MGSA…IFAN), 58 to 78 (LLHW…GLEV), 94 to 114 (IFPA…YYLI), 124 to 144 (GWAI…ALLG), 154 to 174 (FLLA…AVFF), 176 to 196 (EELS…LITL), 199 to 219 (MKVG…AAVL), 253 to 273 (ILTP…NAGV), 283 to 303 (IFST…PLGV), 327 to 347 (VFAI…LAGL), and 361 to 381 (LSRL…YLLL).

It belongs to the NhaA Na(+)/H(+) (TC 2.A.33) antiporter family.

The protein resides in the cell inner membrane. It catalyses the reaction Na(+)(in) + 2 H(+)(out) = Na(+)(out) + 2 H(+)(in). Na(+)/H(+) antiporter that extrudes sodium in exchange for external protons. The polypeptide is Na(+)/H(+) antiporter NhaA (Mannheimia succiniciproducens (strain KCTC 0769BP / MBEL55E)).